The chain runs to 103 residues: N(4)-acetylcytidine amidohydrolase (103 aa).

Residues 7 to 93 form the ASCH domain; sequence TFFERFEQDI…VIAEIYPGLE (87 aa). The active-site Proton acceptor is the Lys-21. The active-site Nucleophile is Thr-24. Catalysis depends on Glu-74, which acts as the Proton donor.

Belongs to the N(4)-acetylcytidine amidohydrolase family.

It carries out the reaction N(4)-acetylcytidine + H2O = cytidine + acetate + H(+). It catalyses the reaction N(4)-acetyl-2'-deoxycytidine + H2O = 2'-deoxycytidine + acetate + H(+). The enzyme catalyses N(4)-acetylcytosine + H2O = cytosine + acetate + H(+). In terms of biological role, catalyzes the hydrolysis of N(4)-acetylcytidine (ac4C). This Shewanella putrefaciens (strain CN-32 / ATCC BAA-453) protein is N(4)-acetylcytidine amidohydrolase.